Here is a 716-residue protein sequence, read N- to C-terminus: Fatty acid oxidation complex subunit alpha (716 aa).

The enoyl-CoA hydratase/isomerase stretch occupies residues 1–189 (MIYQSPTIQV…KVGAIDAVVA (189 aa)). Asp-296 is a binding site for substrate. Residues 311 to 716 (QAVNSAAVLG…AATNGSYYPA (406 aa)) form a 3-hydroxyacyl-CoA dehydrogenase region. Residues Met-324, Asp-343, 400–402 (VVE), Lys-407, and Ser-429 each bind NAD(+). The active-site For 3-hydroxyacyl-CoA dehydrogenase activity is His-450. Asn-453 lines the NAD(+) pocket. Substrate contacts are provided by Asn-500 and Tyr-660.

The protein in the N-terminal section; belongs to the enoyl-CoA hydratase/isomerase family. This sequence in the C-terminal section; belongs to the 3-hydroxyacyl-CoA dehydrogenase family. Heterotetramer of two alpha chains (FadB) and two beta chains (FadA).

It catalyses the reaction a (3S)-3-hydroxyacyl-CoA + NAD(+) = a 3-oxoacyl-CoA + NADH + H(+). The catalysed reaction is a (3S)-3-hydroxyacyl-CoA = a (2E)-enoyl-CoA + H2O. It carries out the reaction a 4-saturated-(3S)-3-hydroxyacyl-CoA = a (3E)-enoyl-CoA + H2O. The enzyme catalyses (3S)-3-hydroxybutanoyl-CoA = (3R)-3-hydroxybutanoyl-CoA. It catalyses the reaction a (3Z)-enoyl-CoA = a 4-saturated (2E)-enoyl-CoA. The catalysed reaction is a (3E)-enoyl-CoA = a 4-saturated (2E)-enoyl-CoA. It participates in lipid metabolism; fatty acid beta-oxidation. Functionally, involved in the aerobic and anaerobic degradation of long-chain fatty acids via beta-oxidation cycle. Catalyzes the formation of 3-oxoacyl-CoA from enoyl-CoA via L-3-hydroxyacyl-CoA. It can also use D-3-hydroxyacyl-CoA and cis-3-enoyl-CoA as substrate. The sequence is that of Fatty acid oxidation complex subunit alpha from Shewanella loihica (strain ATCC BAA-1088 / PV-4).